A 431-amino-acid polypeptide reads, in one-letter code: Adenylosuccinate synthetase (431 aa).

Residues 13–19 and 41–43 each bind GTP; these read GDEGKGK and GHT. Asp-14 acts as the Proton acceptor in catalysis. Mg(2+)-binding residues include Asp-14 and Gly-41. IMP contacts are provided by residues 14 to 17, 39 to 42, Thr-130, Arg-144, Gln-225, Thr-240, and Arg-304; these read DEGK and NAGH. His-42 functions as the Proton donor in the catalytic mechanism. 300–306 lines the substrate pocket; the sequence is ATTGRKR. GTP is bound by residues Arg-306, 332–334, and 415–417; these read KLD and STG.

Belongs to the adenylosuccinate synthetase family. Homodimer. Mg(2+) is required as a cofactor.

The protein localises to the cytoplasm. It catalyses the reaction IMP + L-aspartate + GTP = N(6)-(1,2-dicarboxyethyl)-AMP + GDP + phosphate + 2 H(+). The protein operates within purine metabolism; AMP biosynthesis via de novo pathway; AMP from IMP: step 1/2. Functionally, plays an important role in the de novo pathway of purine nucleotide biosynthesis. Catalyzes the first committed step in the biosynthesis of AMP from IMP. The chain is Adenylosuccinate synthetase from Shewanella denitrificans (strain OS217 / ATCC BAA-1090 / DSM 15013).